The primary structure comprises 207 residues: Small ribosomal subunit protein uS4 (207 aa).

The S4 RNA-binding domain occupies 97-159 (SRLDNVCYRM…AKSQLRIQAA (63 aa)).

This sequence belongs to the universal ribosomal protein uS4 family. As to quaternary structure, part of the 30S ribosomal subunit. Contacts protein S5. The interaction surface between S4 and S5 is involved in control of translational fidelity.

Its function is as follows. One of the primary rRNA binding proteins, it binds directly to 16S rRNA where it nucleates assembly of the body of the 30S subunit. In terms of biological role, with S5 and S12 plays an important role in translational accuracy. The polypeptide is Small ribosomal subunit protein uS4 (Halorhodospira halophila (strain DSM 244 / SL1) (Ectothiorhodospira halophila (strain DSM 244 / SL1))).